Here is a 177-residue protein sequence, read N- to C-terminus: Large ribosomal subunit protein uL6 (177 aa).

This sequence belongs to the universal ribosomal protein uL6 family. Part of the 50S ribosomal subunit.

Functionally, this protein binds to the 23S rRNA, and is important in its secondary structure. It is located near the subunit interface in the base of the L7/L12 stalk, and near the tRNA binding site of the peptidyltransferase center. This is Large ribosomal subunit protein uL6 from Salmonella dublin (strain CT_02021853).